Consider the following 143-residue polypeptide: Nucleoside diphosphate kinase (143 aa).

ATP is bound by residues Lys-11, Phe-59, Arg-87, Thr-93, Arg-104, and Asn-114. His-117 serves as the catalytic Pros-phosphohistidine intermediate.

Belongs to the NDK family. Homotetramer. The cofactor is Mg(2+).

The protein resides in the cytoplasm. It catalyses the reaction dZDP + ATP = dZTP + ADP. The enzyme catalyses a 2'-deoxyribonucleoside 5'-diphosphate + ATP = a 2'-deoxyribonucleoside 5'-triphosphate + ADP. It carries out the reaction a ribonucleoside 5'-diphosphate + ATP = a ribonucleoside 5'-triphosphate + ADP. The protein operates within purine metabolism. Major role in the synthesis of nucleoside triphosphates other than ATP. The ATP gamma phosphate is transferred to the NDP beta phosphate via a ping-pong mechanism, using a phosphorylated active-site intermediate. Its function is as follows. (Microbial infection) Catalyzes the phosphorylation of dZDP to dZTP, when the bacterium is infected by a phage that produces the substrate for the synthesis of dZTP (2- amino-2'-deoxyadenosine 5'-triphosphate), which is then used by the phage as a DNA polymerase substrate. The sequence is that of Nucleoside diphosphate kinase from Acinetobacter baumannii (strain AB307-0294).